A 246-amino-acid polypeptide reads, in one-letter code: UDP-N-acetyl-D-mannosaminuronic acid transferase (246 aa).

It belongs to the glycosyltransferase 26 family.

The catalysed reaction is UDP-N-acetyl-alpha-D-mannosaminouronate + N-acetyl-alpha-D-glucosaminyl-di-trans,octa-cis-undecaprenyl diphosphate = beta-D-ManNAcA-(1-&gt;4)-alpha-D-GlcNAc-di-trans,octa-cis-undecaprenyl diphosphate + UDP + H(+). It participates in bacterial outer membrane biogenesis; enterobacterial common antigen biosynthesis. Functionally, catalyzes the synthesis of Und-PP-GlcNAc-ManNAcA (Lipid II), the second lipid-linked intermediate involved in enterobacterial common antigen (ECA) synthesis. The polypeptide is UDP-N-acetyl-D-mannosaminuronic acid transferase (Escherichia coli O6:K15:H31 (strain 536 / UPEC)).